Consider the following 404-residue polypeptide: Caspase-1 (404 aa).

A CARD domain is found at 1–91 (MADKVLKEKR…HLAGVLELST (91 aa)). The propeptide occupies 1–119 (MADKVLKEKR…PFPAPQTVQD (119 aa)). The segment at 111 to 132 (FPAPQTVQDNPVKPASSEPRGS) is disordered. Catalysis depends on residues histidine 237 and cysteine 285. The propeptide occupies 298 to 316 (SVGPSGNSSLLAAEDFEYD). Serine 302 is subject to Phosphoserine.

Belongs to the peptidase C14A family. Heterotetramer that consists of two anti-parallel arranged heterodimers, each one formed by a 20 kDa (Caspase-1 subunit p20) and a 10 kDa (Caspase-1 subunit p10) subunit. May be a component of the inflammasome, a protein complex which also includes PYCARD, CARD8 and NLRP2 and whose function would be the activation of pro-inflammatory caspases. Component of the AIM2 PANoptosome complex, a multiprotein complex that drives inflammatory cell death (PANoptosis). Both the p10 and p20 subunits interact with MEFV. Interacts with CARD17P/INCA and CARD18. Interacts with SERPINB1; this interaction regulates CASP1 activity. As to quaternary structure, heterotetramer that consists of two anti-parallel arranged heterodimers, each one formed by a 20 kDa (Caspase-1 subunit p20) and a 10 kDa (Caspase-1 subunit p10) subunit. Post-translationally, the two subunits are derived from the precursor sequence by an autocatalytic mechanism. Ubiquitinated via 'Lys-11'-linked polyubiquitination. Deubiquitinated by USP8.

It is found in the cytoplasm. It localises to the cell membrane. It catalyses the reaction Strict requirement for an Asp residue at position P1 and has a preferred cleavage sequence of Tyr-Val-Ala-Asp-|-.. Thiol protease involved in a variety of inflammatory processes by proteolytically cleaving other proteins, such as the precursors of the inflammatory cytokines interleukin-1 beta (IL1B) and interleukin 18 (IL18) as well as the pyroptosis inducer Gasdermin-D (GSDMD), into active mature peptides. Plays a key role in cell immunity as an inflammatory response initiator: once activated through formation of an inflammasome complex, it initiates a pro-inflammatory response through the cleavage of the two inflammatory cytokines IL1B and IL18, releasing the mature cytokines which are involved in a variety of inflammatory processes. Cleaves a tetrapeptide after an Asp residue at position P1. Also initiates pyroptosis, a programmed lytic cell death pathway, through cleavage of GSDMD. In contrast to cleavage of interleukin IL1B, recognition and cleavage of GSDMD is not strictly dependent on the consensus cleavage site but depends on an exosite interface on CASP1 that recognizes and binds the Gasdermin-D, C-terminal (GSDMD-CT) part. Cleaves and activates CASP7 in response to bacterial infection, promoting plasma membrane repair. Upon inflammasome activation, during DNA virus infection but not RNA virus challenge, controls antiviral immunity through the cleavage of CGAS, rendering it inactive. In apoptotic cells, cleaves SPHK2 which is released from cells and remains enzymatically active extracellularly. This is Caspase-1 (CASP1) from Sus scrofa (Pig).